The sequence spans 176 residues: RING-H2 finger protein ATL73 (176 aa).

The N-terminal stretch at 1–16 (MARFLLATQATPTISA) is a signal peptide. A helical membrane pass occupies residues 42-62 (VIILAALLCALICALGINSVL). The segment at 113 to 155 (CLICLGDFVEGETVRVLPKCNHGFHVKCIDTWLLSHSSCPTCR) adopts an RING-type; atypical zinc-finger fold.

The protein belongs to the RING-type zinc finger family. ATL subfamily.

Its subcellular location is the membrane. It catalyses the reaction S-ubiquitinyl-[E2 ubiquitin-conjugating enzyme]-L-cysteine + [acceptor protein]-L-lysine = [E2 ubiquitin-conjugating enzyme]-L-cysteine + N(6)-ubiquitinyl-[acceptor protein]-L-lysine.. It functions in the pathway protein modification; protein ubiquitination. The chain is RING-H2 finger protein ATL73 (ATL73) from Arabidopsis thaliana (Mouse-ear cress).